We begin with the raw amino-acid sequence, 339 residues long: Aspartate carbamoyltransferase catalytic subunit (339 aa).

R69 and T70 together coordinate carbamoyl phosphate. K97 is an L-aspartate binding site. R119, H149, and Q152 together coordinate carbamoyl phosphate. Residues R182 and R237 each contribute to the L-aspartate site. 2 residues coordinate carbamoyl phosphate: G278 and P279.

The protein belongs to the aspartate/ornithine carbamoyltransferase superfamily. ATCase family. As to quaternary structure, heterododecamer (2C3:3R2) of six catalytic PyrB chains organized as two trimers (C3), and six regulatory PyrI chains organized as three dimers (R2).

The enzyme catalyses carbamoyl phosphate + L-aspartate = N-carbamoyl-L-aspartate + phosphate + H(+). The protein operates within pyrimidine metabolism; UMP biosynthesis via de novo pathway; (S)-dihydroorotate from bicarbonate: step 2/3. In terms of biological role, catalyzes the condensation of carbamoyl phosphate and aspartate to form carbamoyl aspartate and inorganic phosphate, the committed step in the de novo pyrimidine nucleotide biosynthesis pathway. The protein is Aspartate carbamoyltransferase catalytic subunit of Hydrogenovibrio crunogenus (strain DSM 25203 / XCL-2) (Thiomicrospira crunogena).